A 334-amino-acid polypeptide reads, in one-letter code: L-lactate dehydrogenase B chain (334 aa).

30 to 58 (GQVGMACAVSVLLKELADELALVDILEDK) serves as a coordination point for NAD(+). 3 residues coordinate substrate: R107, N139, and R170. Position 139 (N139) interacts with NAD(+). The active-site Proton acceptor is H194. T249 is a binding site for substrate.

This sequence belongs to the LDH/MDH superfamily. LDH family. As to quaternary structure, homotetramer.

The protein localises to the cytoplasm. The catalysed reaction is (S)-lactate + NAD(+) = pyruvate + NADH + H(+). It functions in the pathway fermentation; pyruvate fermentation to lactate; (S)-lactate from pyruvate: step 1/1. Its function is as follows. Interconverts simultaneously and stereospecifically pyruvate and lactate with concomitant interconversion of NADH and NAD(+). This Xenopus laevis (African clawed frog) protein is L-lactate dehydrogenase B chain (ldhb).